The chain runs to 233 residues: MRITQYQTVWQLTFFPALFPVNCYLVEEENEVTLIDAALPGSYKGIIQAVNQLGKPLQHILLTHAHGDHVGSLDTLAQTFPHAKVMISERDSFLLQGDTSLRQDEPQTPIKGGIPKHIQTKPHQLLTGGETIGSLLAIPTPGHTPGSMSFLDTRNGTLIAGDAFQLRGGIAVSGQIKWAFPFPAFATWNKEEAIKSAQLLADKAPSCLAVGHGKFLRSPSERMRQAIQKAKKG.

Residues His64, His66, Asp68, His69, His143, Asp162, and His212 each contribute to the Zn(2+) site.

The protein belongs to the metallo-beta-lactamase superfamily. Glyoxalase II family. Zn(2+) is required as a cofactor.

This is an uncharacterized protein from Bacillus subtilis (strain 168).